The chain runs to 123 residues: Large ribosomal subunit protein uL14 (123 aa).

Belongs to the universal ribosomal protein uL14 family. As to quaternary structure, part of the 50S ribosomal subunit. Forms a cluster with proteins L3 and L19. In the 70S ribosome, L14 and L19 interact and together make contacts with the 16S rRNA in bridges B5 and B8.

Its function is as follows. Binds to 23S rRNA. Forms part of two intersubunit bridges in the 70S ribosome. The protein is Large ribosomal subunit protein uL14 of Sodalis glossinidius (strain morsitans).